The sequence spans 608 residues: UvrABC system protein C (608 aa).

The 79-residue stretch at 13–91 folds into the GIY-YIG domain; the sequence is HDAGVYRMYD…IKTYQPRYNV (79 aa). One can recognise a UVR domain in the interval 201–236; sequence QQVLEHLIHKMEQASLALDFEEAARIRDQIQAVRAV.

Belongs to the UvrC family. In terms of assembly, interacts with UvrB in an incision complex.

It is found in the cytoplasm. The UvrABC repair system catalyzes the recognition and processing of DNA lesions. UvrC both incises the 5' and 3' sides of the lesion. The N-terminal half is responsible for the 3' incision and the C-terminal half is responsible for the 5' incision. This is UvrABC system protein C from Pasteurella multocida (strain Pm70).